The following is a 101-amino-acid chain: Small ribosomal subunit protein uS14 (101 aa).

This sequence belongs to the universal ribosomal protein uS14 family. In terms of assembly, part of the 30S ribosomal subunit. Contacts proteins S3 and S10.

Binds 16S rRNA, required for the assembly of 30S particles and may also be responsible for determining the conformation of the 16S rRNA at the A site. The polypeptide is Small ribosomal subunit protein uS14 (Francisella philomiragia subsp. philomiragia (strain ATCC 25017 / CCUG 19701 / FSC 153 / O#319-036)).